Here is an 84-residue protein sequence, read N- to C-terminus: Small ribosomal subunit protein uS17 (84 aa).

This sequence belongs to the universal ribosomal protein uS17 family. In terms of assembly, part of the 30S ribosomal subunit.

One of the primary rRNA binding proteins, it binds specifically to the 5'-end of 16S ribosomal RNA. This Alkaliphilus oremlandii (strain OhILAs) (Clostridium oremlandii (strain OhILAs)) protein is Small ribosomal subunit protein uS17.